Here is a 257-residue protein sequence, read N- to C-terminus: Zinc import ATP-binding protein ZnuC (257 aa).

Positions 6 to 221 (VRLEQITVAF…AFVETFGHQV (216 aa)) constitute an ABC transporter domain. 38-45 (GPNGAGKT) is an ATP binding site.

Belongs to the ABC transporter superfamily. Zinc importer (TC 3.A.1.15.5) family. In terms of assembly, the complex is composed of two ATP-binding proteins (ZnuC), two transmembrane proteins (ZnuB) and a solute-binding protein (ZnuA).

The protein localises to the cell inner membrane. It catalyses the reaction Zn(2+)(out) + ATP(in) + H2O(in) = Zn(2+)(in) + ADP(in) + phosphate(in) + H(+)(in). Its function is as follows. Part of the ABC transporter complex ZnuABC involved in zinc import. Responsible for energy coupling to the transport system. The protein is Zinc import ATP-binding protein ZnuC of Marinobacter nauticus (strain ATCC 700491 / DSM 11845 / VT8) (Marinobacter aquaeolei).